A 406-amino-acid polypeptide reads, in one-letter code: MTMTLSVVAVTHRTAPVTIRERLSLPVEQQCQWLQRWGNQVPEIVLLVTCHRTEVYWLDGEETAHRGVEWLAELGGLTVEELERWVLQRSGAEAVRHAFCVAAGLDSRVVGEPQILGQVRRARDLARAAGTLGPILDRLFSCSLATGRMVRVRAGWSTGKRSLARVAVREAARLCSDLQSARVLVLGAGETGRDVIAALCRCQPAVVWWTNRSPGRLAQIPSEEPVRIVDWSEWPRLVTEADVVFVATNAPEPIVRLEHVTRHARLPRLLVDLAVPRNVDPAISDVPGIRVVTIDDLPADPVPVAAWDGVAVEPYVERAVQRYLRWLEARSIAAEIRAAHETLQSMLERELEKVLRLALRDPARTGEVKRVAAASMARKTLFPLFRALESEPQRVALALRLLAYDR.

Substrate-binding positions include 49 to 52 (TCHR), Ser107, 112 to 114 (EPQ), and Gln118. Catalysis depends on Cys50, which acts as the Nucleophile. An NADP(+)-binding site is contributed by 187–192 (GAGETG).

This sequence belongs to the glutamyl-tRNA reductase family. In terms of assembly, homodimer.

It catalyses the reaction (S)-4-amino-5-oxopentanoate + tRNA(Glu) + NADP(+) = L-glutamyl-tRNA(Glu) + NADPH + H(+). The protein operates within porphyrin-containing compound metabolism; protoporphyrin-IX biosynthesis; 5-aminolevulinate from L-glutamyl-tRNA(Glu): step 1/2. Catalyzes the NADPH-dependent reduction of glutamyl-tRNA(Glu) to glutamate 1-semialdehyde (GSA). In Thermomicrobium roseum (strain ATCC 27502 / DSM 5159 / P-2), this protein is Glutamyl-tRNA reductase.